The sequence spans 262 residues: Outer dense fiber protein 1 (262 aa).

Ser5 and Ser10 each carry phosphoserine. Repeat 1 spans residues 34–38; the sequence is RCLCD. The 2 X 5 AA repeats of [RC]-C-L-C-D stretch occupies residues 34-77; sequence RCLCDLYMHPYCCCDLHPYPYCLCYSKRSRSCGLCDLYPCCLCD. Residue Ser64 is modified to Phosphoserine. Repeat 2 spans residues 73-77; sequence CCLCD. A phosphoserine mark is found at Ser86, Ser122, Ser123, Ser151, Ser167, Ser189, and Ser194. The C-X-P repeat region stretch occupies residues 209 to 250; it reads CNPCNPCSPCNPCNPCNPCNPCSPCSPCSPCNPCDPCNPCYP.

In terms of assembly, interacts (via leucine zipper motif) with TCP11. Interacts with SPAG4. Interacts with KLC3. Interacts with CCDC42.

It is found in the cell projection. It localises to the cilium. The protein localises to the flagellum. Its subcellular location is the cytoplasm. The protein resides in the cytoskeleton. It is found in the microtubule organizing center. It localises to the centrosome. Functionally, component of the outer dense fibers (ODF) of spermatozoa. ODF are filamentous structures located on the outside of the axoneme in the midpiece and principal piece of the mammalian sperm tail and may help to maintain the passive elastic structures and elastic recoil of the sperm tail. The polypeptide is Outer dense fiber protein 1 (ODF1) (Sus scrofa (Pig)).